The sequence spans 2646 residues: Probable helicase senataxin (2646 aa).

S102 is subject to Phosphoserine. A Glycyl lysine isopeptide (Lys-Gly) (interchain with G-Cter in SUMO1) cross-link involves residue K339. S640 is subject to Phosphoserine. 2 disordered regions span residues 705–734 (KISA…WGCD) and 825–876 (GGAL…DDED). Residues 714–727 (ESSSYAPSNSTSRN) show a composition bias toward polar residues. Over residues 867–876 (LDNSSSDDED) the composition is skewed to acidic residues. 6 positions are modified to phosphoserine: S870, S871, S872, S938, S1002, and S1004. The segment at 1001-1023 (ISDSDEEEDEDEDERSSSEENIK) is disordered. A compositionally biased stretch (acidic residues) spans 1003–1014 (DSDEEEDEDEDE). Residue K1051 forms a Glycyl lysine isopeptide (Lys-Gly) (interchain with G-Cter in SUMO2) linkage. The segment covering 1122-1133 (RNKAEGVKEHAG) has biased composition (basic and acidic residues). The segment at 1122–1245 (RNKAEGVKEH…DTRRGQSKSS (124 aa)) is disordered. Over residues 1147-1156 (GVKKPKRKRY) the composition is skewed to basic residues. The span at 1176-1189 (LPDRRDLTESDLKS) shows a compositional bias: basic and acidic residues. A compositionally biased stretch (polar residues) spans 1196 to 1211 (TPSSSVERDSTILQKS). Basic residues predominate over residues 1212–1222 (TKSRTHSKPVR). Position 1318 is a phosphoserine (S1318). Residues K1328, K1329, and K1398 each participate in a glycyl lysine isopeptide (Lys-Gly) (interchain with G-Cter in SUMO2) cross-link. A Phosphoserine modification is found at S1472. A Phosphothreonine modification is found at T1474. The segment at 1591–1627 (LSKSLESTTLQQSALKNKSSGAQPNLKVTPPSSMGSQ) is disordered. Over residues 1595-1613 (LESTTLQQSALKNKSSGAQ) the composition is skewed to polar residues. 1939-1946 (GPPGTGKS) serves as a coordination point for ATP. A Bipartite nuclear localization signal motif is present at residues 2046–2063 (KKDLPSHIQEMLRRKEIL). T2450 is modified (phosphothreonine). Disordered regions lie at residues 2450–2472 (THPP…NRLD), 2486–2506 (HTPS…QDRL), and 2569–2624 (SHRS…THHV). 2 stretches are compositionally biased toward basic and acidic residues: residues 2496-2506 (GPERPLLQDRL) and 2593-2608 (KYSD…REPR). The necessary for nuclear localization stretch occupies residues 2632–2646 (RRRLDDSSAKRRQFL).

Belongs to the DNA2/NAM7 helicase family. In terms of assembly, homodimer. Interacts with PER2; the interaction inhibits termination of circadian target genes. Interacts with CHD4, POLR2A, PRKDC and TRIM28. Interacts with UBE2I. Interacts (via N-terminus domain) with EXOSC9 (via C-terminus region); the interaction enhances SETX sumoylation. Interacts with NCL (via N-terminus domain). Interacts with PABPN1, PABPC1 and SF3B1. Interacts with SMN1/SMN2 and POLR2A; SMN1/SMN2 recruits SETX to POLR2A. Post-translationally, ubiquitinated. In terms of processing, sumoylated preferentially with SUMO2 or SUMO3. Expressed in cerebellum, hippocampus, olfactory bulb, Bergmann glial fibers, stellate cells and Purkinje cells. Expressed in the epithelial cells of the lens but not in mature lens fiber cells. Expressed in the retina (highly expressed in inner and outer segments of photoreceptors and outer plexiform layer cells but weakly expressed in the inner plexiform and ganglion cell layers). Expressed in the kidney.

Its subcellular location is the nucleus. It is found in the nucleoplasm. The protein localises to the nucleolus. The protein resides in the cytoplasm. It localises to the chromosome. Its subcellular location is the telomere. It is found in the cell projection. The protein localises to the axon. The protein resides in the growth cone. Probable RNA/DNA helicase involved in diverse aspects of RNA metabolism and genomic integrity. Plays a role in transcription regulation by its ability to modulate RNA Polymerase II (Pol II) binding to chromatin and through its interaction with proteins involved in transcription. Contributes to the mRNA splicing efficiency and splice site selection. Required for the resolution of R-loop RNA-DNA hybrid formation at G-rich pause sites located downstream of the poly(A) site, allowing XRN2 recruitment and XRN2-mediated degradation of the downstream cleaved RNA and hence efficient RNA polymerase II (RNAp II) transcription termination. Required for the 3' transcriptional termination of PER1 and CRY2, thus playing an important role in the circadian rhythm regulation. Involved in DNA double-strand breaks damage response generated by oxidative stress. In association with RRP45, targets the RNA exosome complex to sites of transcription-induced DNA damage. Plays a role in the development and maturation of germ cells: essential for male meiosis, acting at the interface of transcription and meiotic recombination, and in the process of gene silencing during meiotic sex chromosome inactivation (MSCI). Plays a role in neurite outgrowth in hippocampal cells through FGF8-activated signaling pathways. Inhibits retinoic acid-induced apoptosis. May be involved in telomeric stability through the regulation of telomere repeat-containing RNA (TERRA) transcription. The sequence is that of Probable helicase senataxin from Mus musculus (Mouse).